Consider the following 465-residue polypeptide: Sperm microtubule associated protein 2-like (465 aa).

The segment covering 1–29 (MENQEFLSSSAPSEVTDGQVSTEISTCSE) has biased composition (polar residues). Residues 1–140 (MENQEFLSSS…REAKETELLP (140 aa)) form a disordered region. 2 stretches are compositionally biased toward basic and acidic residues: residues 40 to 70 (LDTH…QDQR) and 114 to 137 (KARE…KETE). THEG repeat units lie at residues 174-192 (RKCF…PKKQ), 214-233 (GALK…PKEV), 260-279 (PALF…PNGF), 297-316 (SLRI…AKGT), 333-352 (STLS…PRIK), 373-392 (AAMI…SKSV), 409-428 (ATTH…PNKR), and 446-465 (AALK…PLTR).

This is Sperm microtubule associated protein 2-like from Homo sapiens (Human).